An 88-amino-acid polypeptide reads, in one-letter code: Thioredoxin-2 (88 aa).

Residues 2 to 88 form the Thioredoxin domain; it reads SRVIHISSNE…YRNGAKVSEF (87 aa). Active-site nucleophile residues include cysteine 31 and cysteine 34. A disulfide bridge connects residues cysteine 31 and cysteine 34.

The protein belongs to the thioredoxin family.

Functionally, participates in various redox reactions through the reversible oxidation of its active center dithiol to a disulfide and catalyzes dithiol-disulfide exchange reactions. This Dictyostelium discoideum (Social amoeba) protein is Thioredoxin-2 (trxB).